Reading from the N-terminus, the 272-residue chain is MTEQYQHKARKRFGQNFLHDAGVIDRILRSINAKAGDRMLEIGPGQGALTAGILNSGAQLDVVELDKDLIPILNQQFAGKSNFNLHQGDALKFDFNSLNAAPNSLRVVGNLPYNISTPLIFHLLNNAGIIRDMHFMLQKEVVERLAAGPGGGDWGRLSIMVQYHCRVEHLFNVGPGAFNPPPKVDSAIVRLVPHAVLPHPAKDHRLLERVVREAFNQRRKTLRNTLKQLLSNAEIEAAGVDGSLRPEQLDLAAFVRLADKLAEQPAKAPEAD.

S-adenosyl-L-methionine contacts are provided by asparagine 16, leucine 18, glycine 43, glutamate 64, aspartate 89, and asparagine 110.

The protein belongs to the class I-like SAM-binding methyltransferase superfamily. rRNA adenine N(6)-methyltransferase family. RsmA subfamily.

The protein resides in the cytoplasm. The enzyme catalyses adenosine(1518)/adenosine(1519) in 16S rRNA + 4 S-adenosyl-L-methionine = N(6)-dimethyladenosine(1518)/N(6)-dimethyladenosine(1519) in 16S rRNA + 4 S-adenosyl-L-homocysteine + 4 H(+). Specifically dimethylates two adjacent adenosines (A1518 and A1519) in the loop of a conserved hairpin near the 3'-end of 16S rRNA in the 30S particle. May play a critical role in biogenesis of 30S subunits. The sequence is that of Ribosomal RNA small subunit methyltransferase A from Pseudomonas fluorescens (strain Pf0-1).